A 130-amino-acid chain; its full sequence is Fluoride-specific ion channel FluC (130 aa).

The next 4 helical transmembrane spans lie at 10-30 (FAVALGAIGGSLSRYYLSLWF), 41-61 (GTLIINLSGCVVMGWFMTVAM), 72-89 (LLFGVGFLGSYTTFSTYE), and 105-125 (LVYWLGSCLFGALAMELGILL). Residues glycine 80 and threonine 83 each coordinate Na(+).

Belongs to the fluoride channel Fluc/FEX (TC 1.A.43) family.

The protein resides in the cell inner membrane. It catalyses the reaction fluoride(in) = fluoride(out). Na(+) is not transported, but it plays an essential structural role and its presence is essential for fluoride channel function. In terms of biological role, fluoride-specific ion channel. Important for reducing fluoride concentration in the cell, thus reducing its toxicity. The chain is Fluoride-specific ion channel FluC from Synechococcus sp. (strain JA-2-3B'a(2-13)) (Cyanobacteria bacterium Yellowstone B-Prime).